The chain runs to 226 residues: MRLTRSLALLSACTLAAASTQQPLTDSDGHPKPDPPPYEFPLKFDNPRTDCKYVSQPWIADIFKNIANDFADVFKYVAPDVTFRIMGHHPFAGAYSNPKIAYINSLHRLNNCLKDNEVDSKLWAIHGGCDSEWTIMELYFNATTKRGLPWELTSLWVSRWDEDKLLREVRTYVDAGQIMRTLWDNEIWWNSSDRVTHYDIMPGPGGLPPGINASLEVDLSEELQEL.

Residues 1–18 form the signal peptide; that stretch reads MRLTRSLALLSACTLAAA. The interval 20 to 39 is disordered; the sequence is TQQPLTDSDGHPKPDPPPYE. N-linked (GlcNAc...) asparagine glycans are attached at residues Asn141, Asn190, and Asn212.

Belongs to the dimerizing cyclase tstC family.

The catalysed reaction is 2 [4-(deca-1,8-diyl)-2,5-dioxo-2,5-dihydro-3-furanyl]acetate + H(+) = 2-[(1R,8S,14R,15R)-11-hydroxy-14,15-bis[(6E)-oct-6-en-1-yl]-3,5,9-trioxo-4,10-dioxatetracyclo[9.4.0.0(2,6).0(8,12)]pentadeca-2(6),12-dien-8-yl]acetate + CO2. It participates in secondary metabolite biosynthesis. Its function is as follows. Dimerizing cyclase; part of the gene cluster that mediates the biosynthesis of the antihypercholesterolemic agents phomoidrides which are dimeric anhydrides. Within the pathway, phiC produces the bicyclo[4.3.1]deca-1,6-diene core of phomoidrides via the dimerization of the monomeric anhydrides leading to prephomoidride. The pathway begins with the highly reducing polyketide synthase phiA that catalyzes the formation of a C12-fatty acyl-ACP, starting from one acetate and 5 malonate units. The hydrolase phiM is involved in the release of the C12-fatty acyl chain from phiA. The alkylcitrate synthase (ACS) phiJ and the alkylcitrate dehydratase (ACDH) phiI then give rise to decarboxylated monomeric anhydrides by coupling the C12-fatty acyl chain with oxalacetic acid. The cyclase phiC is responsible for the dimerization of the monomeric anhydrides which leads to the production of prephomoidride that contains the characteristic bicyclo[4.3.1]deca-1,6-diene system of phomoidrides. Iterative oxidation catalyzed by the alpha-ketoglutarate-dependent dioxygenase phiK produced then phomoidride A. Finally, the methyltransferase phiE converts phomoidride A to phomoidride B via an acetalization reaction. The phosphatidylethanolamine-binding protein phiB and phiN are not essential for dimerization and their functions have still to be determined. This chain is Dimerizing cyclase phiC, found in Fungal sp. (strain ATCC 74256).